A 308-amino-acid chain; its full sequence is Ribonuclease HIII (308 aa).

The 217-residue stretch at 88–304 folds into the RNase H type-2 domain; it reads FHCIGSDEAG…RDKAIHLMNQ (217 aa). The a divalent metal cation site is built by Asp-94, Glu-95, and Asp-199.

It belongs to the RNase HII family. RnhC subfamily. Requires Mn(2+) as cofactor. The cofactor is Mg(2+).

The protein localises to the cytoplasm. The catalysed reaction is Endonucleolytic cleavage to 5'-phosphomonoester.. In terms of biological role, endonuclease that specifically degrades the RNA of RNA-DNA hybrids. The protein is Ribonuclease HIII of Staphylococcus epidermidis (strain ATCC 12228 / FDA PCI 1200).